The chain runs to 54 residues: Large ribosomal subunit protein bL33A (54 aa).

This sequence belongs to the bacterial ribosomal protein bL33 family.

In Mycolicibacterium gilvum (strain PYR-GCK) (Mycobacterium gilvum (strain PYR-GCK)), this protein is Large ribosomal subunit protein bL33A.